A 583-amino-acid polypeptide reads, in one-letter code: Protein translocase subunit SecD (583 aa).

6 consecutive transmembrane segments (helical) span residues 7–27 (FGVVLVVLAACSGFLFPTLQW), 419–439 (LVWGLCAVLLFMLVWYQEAGV), 446–468 (LLNLYIMFGVLSAFNLTLTLSSI), 469–489 (AGMILTIGMAVDANVVVFERI), 511–531 (FWAIMDSNVTTFIAALFLSVL), and 538–558 (GFAYSLAIGVVSSVFTALFVS).

Belongs to the SecD/SecF family. SecD subfamily. Forms a complex with SecF. Part of the essential Sec protein translocation apparatus which comprises SecA, SecYEG and auxiliary proteins SecDF. Other proteins may also be involved.

It is found in the cell inner membrane. Part of the Sec protein translocase complex. Interacts with the SecYEG preprotein conducting channel. SecDF uses the proton motive force (PMF) to complete protein translocation after the ATP-dependent function of SecA. This chain is Protein translocase subunit SecD, found in Treponema pallidum (strain Nichols).